The sequence spans 395 residues: Beta-1,4-galactosyltransferase 3 (395 aa).

Topologically, residues 1 to 10 (MLRRLLERPC) are cytoplasmic. The chain crosses the membrane as a helical; Signal-anchor for type II membrane protein span at residues 11 to 31 (TLALLVGSQLAVMMYLSLGGF). Residues 32-395 (RSLSALFGRD…ANHTAPHGSH (364 aa)) lie on the Lumenal side of the membrane. An N-linked (GlcNAc...) asparagine glycan is attached at asparagine 57. Cysteine 79 and cysteine 121 are joined by a disulfide. Residues 132 to 136 (PHRAR), 171 to 173 (FNR), 198 to 199 (VD), tyrosine 228, and tryptophan 260 contribute to the UDP-alpha-D-galactose site. The cysteines at positions 192 and 211 are disulfide-linked. A Mn(2+)-binding site is contributed by aspartate 199. Residue 262–265 (GEDD) coordinates N-acetyl-D-glucosamine. Histidine 293 serves as a coordination point for Mn(2+). 293–295 (HRG) provides a ligand contact to UDP-alpha-D-galactose. Arginine 305 lines the N-acetyl-D-glucosamine pocket. N-linked (GlcNAc...) asparagine glycosylation is found at asparagine 339 and asparagine 387. Residues 341 to 395 (TADIGTDPRGPRAPSGPRYPPGSSQAFRQEMLQRRPPARPGPLPTANHTAPHGSH) form a disordered region.

It belongs to the glycosyltransferase 7 family. Mn(2+) is required as a cofactor.

The protein localises to the golgi apparatus. Its subcellular location is the golgi stack membrane. The enzyme catalyses an N-acetyl-beta-D-glucosaminyl derivative + UDP-alpha-D-galactose = a beta-D-galactosyl-(1-&gt;4)-N-acetyl-beta-D-glucosaminyl derivative + UDP + H(+). It carries out the reaction N-acetyl-D-glucosamine + UDP-alpha-D-galactose = beta-D-galactosyl-(1-&gt;4)-N-acetyl-D-glucosamine + UDP + H(+). The catalysed reaction is a beta-D-GlcNAc-(1-&gt;3)-beta-D-Gal-(1-&gt;4)-beta-D-Glc-(1&lt;-&gt;1)-Cer(d18:1(4E)) + UDP-alpha-D-galactose = a neolactoside nLc4Cer(d18:1(4E)) + UDP + H(+). It catalyses the reaction a beta-D-glucosylceramide + UDP-alpha-D-galactose = a beta-D-galactosyl-(1-&gt;4)-beta-D-glucosyl-(1&lt;-&gt;1)-ceramide + UDP + H(+). The enzyme catalyses a neolactoside IV(3)-beta-GlcNAc-nLc4Cer + UDP-alpha-D-galactose = a neolactoside nLc6Cer + UDP + H(+). It functions in the pathway protein modification; protein glycosylation. In terms of biological role, responsible for the synthesis of complex-type N-linked oligosaccharides in many glycoproteins as well as the carbohydrate moieties of glycolipids. The sequence is that of Beta-1,4-galactosyltransferase 3 (B4GALT3) from Cricetulus griseus (Chinese hamster).